A 449-amino-acid chain; its full sequence is Lysine-sensitive aspartokinase 3 (449 aa).

Residues 2–245 (SEIVVSKFGG…AAKRIDEIAF (244 aa)) form an aspartokinase region. Residue 8 to 11 (KFGG) participates in ATP binding. Residues Thr-45, Glu-119, and 198 to 201 (RGGS) each bind substrate. ATP is bound by residues 221–222 (TD), Tyr-227, Arg-232, and 257–258 (KV). The segment at 246–449 (AEAAEMATFG…VQKLHSNLFE (204 aa)) is interface. The segment at 299–449 (FRALALRRNQ…VQKLHSNLFE (151 aa)) is required for homodimerization. Residues 313-394 (LHSLNMLHSR…GLALVALIGN (82 aa)) form the ACT domain. Residues Met-318, Ser-321, 324-325 (FL), 338-340 (SVD), and 345-346 (SE) contribute to the L-lysine site.

It belongs to the aspartokinase family. As to quaternary structure, homodimer. In the inactive form a homotetramer is formed.

The enzyme catalyses L-aspartate + ATP = 4-phospho-L-aspartate + ADP. The protein operates within amino-acid biosynthesis; L-lysine biosynthesis via DAP pathway; (S)-tetrahydrodipicolinate from L-aspartate: step 1/4. Its activity is regulated as follows. Synthesis and activity are sensitive to the allosteric inhibitor lysine, one of the end metabolites of the aspartic acid family branched pathway. The chain is Lysine-sensitive aspartokinase 3 (lysC) from Escherichia coli (strain K12).